The chain runs to 193 residues: Xanthine phosphoribosyltransferase (193 aa).

Residues leucine 20 and threonine 27 each contribute to the xanthine site. Alanine 128–alanine 132 serves as a coordination point for 5-phospho-alpha-D-ribose 1-diphosphate. Position 156 (lysine 156) interacts with xanthine.

It belongs to the purine/pyrimidine phosphoribosyltransferase family. Xpt subfamily. In terms of assembly, homodimer.

Its subcellular location is the cytoplasm. The catalysed reaction is XMP + diphosphate = xanthine + 5-phospho-alpha-D-ribose 1-diphosphate. It participates in purine metabolism; XMP biosynthesis via salvage pathway; XMP from xanthine: step 1/1. In terms of biological role, converts the preformed base xanthine, a product of nucleic acid breakdown, to xanthosine 5'-monophosphate (XMP), so it can be reused for RNA or DNA synthesis. This Streptococcus equi subsp. zooepidemicus (strain H70) protein is Xanthine phosphoribosyltransferase.